The primary structure comprises 774 residues: Vezatin (774 aa).

2 consecutive transmembrane segments (helical) span residues Ile138 to Ala158 and Ser163 to Leu183. Residues Val430 to Cys457 adopt a coiled-coil conformation. The segment covering Phe746–Glu757 has biased composition (acidic residues). The tract at residues Phe746–Gly774 is disordered. Residues Asp758–Asn767 are compositionally biased toward basic and acidic residues.

The protein belongs to the vezatin family. Interacts with myosin VIIa and the cadherin-catenins complex.

Its subcellular location is the cell membrane. The protein resides in the cell junction. The protein localises to the adherens junction. It is found in the nucleus. Functionally, plays a pivotal role in the establishment of adherens junctions and their maintenance in adult life. In Xenopus laevis (African clawed frog), this protein is Vezatin (vezt).